Here is a 143-residue protein sequence, read N- to C-terminus: Nucleoside diphosphate kinase (143 aa).

ATP contacts are provided by Lys11, Phe59, Arg87, Thr93, Arg104, and Asn114. The active-site Pros-phosphohistidine intermediate is the His117.

This sequence belongs to the NDK family. In terms of assembly, homotetramer. Mg(2+) is required as a cofactor.

It is found in the cytoplasm. The catalysed reaction is a 2'-deoxyribonucleoside 5'-diphosphate + ATP = a 2'-deoxyribonucleoside 5'-triphosphate + ADP. The enzyme catalyses a ribonucleoside 5'-diphosphate + ATP = a ribonucleoside 5'-triphosphate + ADP. Functionally, major role in the synthesis of nucleoside triphosphates other than ATP. The ATP gamma phosphate is transferred to the NDP beta phosphate via a ping-pong mechanism, using a phosphorylated active-site intermediate. In Shewanella halifaxensis (strain HAW-EB4), this protein is Nucleoside diphosphate kinase.